Consider the following 335-residue polypeptide: 3-hydroxyproline 2-epimerase (335 aa).

The Proton acceptor role is filled by Cys91. Substrate contacts are provided by residues 92 to 93 (GH), Asp251, and 256 to 257 (GS).

The protein belongs to the proline racemase family.

The catalysed reaction is trans-3-hydroxy-L-proline = cis-3-hydroxy-D-proline. It catalyses the reaction trans-4-hydroxy-L-proline = cis-4-hydroxy-D-proline. Catalyzes the epimerization of trans-3-hydroxy-L-proline (t3LHyp) to cis-3-hydroxy-D-proline (c3DHyp) in vitro. Can also catalyze the epimerization of trans-4-hydroxy-L-proline (t3LHyp) to cis-4-hydroxy-D-proline (c4DHyp), albeit with 3.6-fold lower efficiency. Displays no proline racemase activity. The chain is 3-hydroxyproline 2-epimerase from Burkholderia multivorans (strain ATCC 17616 / 249).